We begin with the raw amino-acid sequence, 535 residues long: Dual specificity calcium/calmodulin-dependent 3',5'-cyclic nucleotide phosphodiesterase 1A (535 aa).

Calmodulin-binding regions lie at residues 24-44 and 114-137; these read TEKM…QLER and EKPK…MYRK. One can recognise a PDEase domain in the interval 142 to 522; the sequence is VGLAYPAAVI…ERWKELAAQE (381 aa). Histidine 219 functions as the Proton donor in the catalytic mechanism. Positions 223, 259, 260, and 366 each coordinate Zn(2+). Mg(2+) is bound at residue aspartate 260.

Belongs to the cyclic nucleotide phosphodiesterase family. PDE1 subfamily. Homodimer. Interacts with YWHAZ. Zn(2+) is required as a cofactor. It depends on Mg(2+) as a cofactor. As to expression, several tissues, including brain, kidney, testes and heart.

It carries out the reaction a nucleoside 3',5'-cyclic phosphate + H2O = a nucleoside 5'-phosphate + H(+). The enzyme catalyses 3',5'-cyclic GMP + H2O = GMP + H(+). It catalyses the reaction 3',5'-cyclic AMP + H2O = AMP + H(+). Its activity is regulated as follows. Type I PDE are activated by the binding of calmodulin in the presence of Ca(2+). Its function is as follows. Calcium/calmodulin-dependent cyclic nucleotide phosphodiesterase with a dual specificity for the second messengers cGMP and cAMP, which are key regulators of many important physiological processes. Has a higher efficiency with cGMP compared to cAMP. The chain is Dual specificity calcium/calmodulin-dependent 3',5'-cyclic nucleotide phosphodiesterase 1A from Homo sapiens (Human).